We begin with the raw amino-acid sequence, 309 residues long: Zinc transporter ZIP2 (309 aa).

Residues 1-8 (MEQLLGIK) are Extracellular-facing. A helical transmembrane segment spans residues 9–29 (LGCLFALLALTLGCGLTPICF). The Cytoplasmic portion of the chain corresponds to 30 to 46 (KWFQIDAARGHHRLVLR). The helical transmembrane segment at 47 to 67 (LLGCISAGVFLGAGFMHMTAE) threads the bilayer. Over 68-103 (ALEEIESQIQKFMVQNRSASERNSSGDADSAHMEYP) the chain is Extracellular. Residues 104-124 (YGELIISLGFFFVFFLESLAL) traverse the membrane as a helical segment. Topologically, residues 125–164 (QCCPGAAGGSTVQDEEWGGAHIFELHSHGHLPSPSKGPLR) are cytoplasmic. A helical transmembrane segment spans residues 165–185 (ALVLLLSLSFHSVFEGLAVGL). 2 residues coordinate Zn(2+): histidine 175 and glutamate 179. Residues 186–189 (QPTV) lie on the Extracellular side of the membrane. A helical membrane pass occupies residues 190 to 210 (AATVQLCLAVLAHKGLVVFGV). Histidine 202 is a Zn(2+) binding site. Residues 211 to 224 (GMRLVHLGTSSRWA) lie on the Cytoplasmic side of the membrane. The helical transmembrane segment at 225 to 245 (VFSILLLALMSPLGLAVGLAV) threads the bilayer. Topologically, residues 246-258 (TGGDSEGGRGLAQ) are extracellular. The helical transmembrane segment at 259-279 (AVLEGVAAGTFLYVTFLEILP) threads the bilayer. Glutamate 276 lines the Zn(2+) pocket. The Cytoplasmic portion of the chain corresponds to 280–288 (RELASPEAP). Residues 289 to 309 (LAKWSCVAAGFAFMAFIALWA) form a helical membrane-spanning segment.

Belongs to the ZIP transporter (TC 2.A.5) family. As to expression, expressed only in prostate and uterine epithelial cells.

Its subcellular location is the cell membrane. It carries out the reaction Zn(2+)(in) = Zn(2+)(out). The catalysed reaction is Cd(2+)(in) = Cd(2+)(out). With respect to regulation, activity is increased at acidic pH (6.5). Inhibited in the presence of high extracellular K(+). In terms of biological role, transporter for the divalent cation Zn(2+). Mediates the influx of Zn(2+) into cells from extracellular space. The Zn(2+) uniporter activity is independent of H(+)-driving force, but is modulated by extracellular pH and membrane potential. Also transports other divalent cations Zn(2+), Cd2(+), Cu2(+), Co2(+) in the order of decreasing affinity, respectively. In the skin, aids in the differentiation of keratinocytes in the epidermis. The chain is Zinc transporter ZIP2 from Homo sapiens (Human).